The primary structure comprises 257 residues: Acetylglutamate kinase (257 aa).

Residues 43–44 (GG), arginine 65, and asparagine 157 each bind substrate.

It belongs to the acetylglutamate kinase family. ArgB subfamily.

It is found in the cytoplasm. The catalysed reaction is N-acetyl-L-glutamate + ATP = N-acetyl-L-glutamyl 5-phosphate + ADP. The protein operates within amino-acid biosynthesis; L-arginine biosynthesis; N(2)-acetyl-L-ornithine from L-glutamate: step 2/4. Its function is as follows. Catalyzes the ATP-dependent phosphorylation of N-acetyl-L-glutamate. The protein is Acetylglutamate kinase of Actinobacillus succinogenes (strain ATCC 55618 / DSM 22257 / CCUG 43843 / 130Z).